Consider the following 115-residue polypeptide: Ribosome-binding factor A (115 aa).

It belongs to the RbfA family. Monomer. Binds 30S ribosomal subunits, but not 50S ribosomal subunits or 70S ribosomes.

It is found in the cytoplasm. One of several proteins that assist in the late maturation steps of the functional core of the 30S ribosomal subunit. Associates with free 30S ribosomal subunits (but not with 30S subunits that are part of 70S ribosomes or polysomes). Required for efficient processing of 16S rRNA. May interact with the 5'-terminal helix region of 16S rRNA. This Streptococcus gordonii (strain Challis / ATCC 35105 / BCRC 15272 / CH1 / DL1 / V288) protein is Ribosome-binding factor A.